The chain runs to 296 residues: NAD kinase (296 aa).

The Proton acceptor role is filled by aspartate 72. NAD(+) is bound by residues 72–73 (DG), 146–147 (ND), arginine 157, lysine 174, aspartate 176, 187–192 (TAYALS), and glutamine 247.

It belongs to the NAD kinase family. A divalent metal cation serves as cofactor.

The protein resides in the cytoplasm. It carries out the reaction NAD(+) + ATP = ADP + NADP(+) + H(+). In terms of biological role, involved in the regulation of the intracellular balance of NAD and NADP, and is a key enzyme in the biosynthesis of NADP. Catalyzes specifically the phosphorylation on 2'-hydroxyl of the adenosine moiety of NAD to yield NADP. The protein is NAD kinase of Pseudomonas putida (strain ATCC 700007 / DSM 6899 / JCM 31910 / BCRC 17059 / LMG 24140 / F1).